The following is a 383-amino-acid chain: Erythronate-4-phosphate dehydrogenase (383 aa).

Substrate contacts are provided by serine 45 and threonine 66. NAD(+)-binding positions include aspartate 146, threonine 174, 205–207, and aspartate 231; that span reads ASR. Arginine 207 is an active-site residue. The active site involves glutamate 236. Histidine 253 acts as the Proton donor in catalysis. Glycine 256 provides a ligand contact to NAD(+). Tyrosine 257 contacts substrate.

Belongs to the D-isomer specific 2-hydroxyacid dehydrogenase family. PdxB subfamily. In terms of assembly, homodimer.

Its subcellular location is the cytoplasm. It carries out the reaction 4-phospho-D-erythronate + NAD(+) = (R)-3-hydroxy-2-oxo-4-phosphooxybutanoate + NADH + H(+). Its pathway is cofactor biosynthesis; pyridoxine 5'-phosphate biosynthesis; pyridoxine 5'-phosphate from D-erythrose 4-phosphate: step 2/5. In terms of biological role, catalyzes the oxidation of erythronate-4-phosphate to 3-hydroxy-2-oxo-4-phosphonooxybutanoate. This is Erythronate-4-phosphate dehydrogenase from Pseudomonas entomophila (strain L48).